Reading from the N-terminus, the 493-residue chain is GTPase Der (493 aa).

Residues 3–166 enclose the EngA-type G 1 domain; sequence PVIALVGRPN…EALGIFPKDN (164 aa). GTP contacts are provided by residues 9–16, 56–60, and 118–121; these read GRPNVGKS, DTGGI, and NKVD. Residues 166–195 are disordered; sequence NAEEEGEGEPASEEVAEGEEPTRIPGPSEK. The span at 167–184 shows a compositional bias: acidic residues; sequence AEEEGEGEPASEEVAEGE. Residues 198 to 371 enclose the EngA-type G 2 domain; that stretch reads IKIAIIGRPN…SVQESFRSAV (174 aa). Residues 204 to 211, 251 to 255, and 316 to 319 contribute to the GTP site; these read GRPNVGKS, DTAGV, and NKWD. In terms of domain architecture, KH-like spans 372 to 456; it reads TRWPTSRLTS…PIRIEYKGGE (85 aa). The segment covering 454-463 has biased composition (basic and acidic residues); sequence GGENPYEGKK. The interval 454–493 is disordered; it reads GGENPYEGKKNSLTARQVNKKRRLMSHHKKAEKKKKDKRR. Residues 471–493 show a composition bias toward basic residues; it reads VNKKRRLMSHHKKAEKKKKDKRR.

Belongs to the TRAFAC class TrmE-Era-EngA-EngB-Septin-like GTPase superfamily. EngA (Der) GTPase family. In terms of assembly, associates with the 50S ribosomal subunit.

Its function is as follows. GTPase that plays an essential role in the late steps of ribosome biogenesis. The protein is GTPase Der of Pseudomonas aeruginosa (strain UCBPP-PA14).